The primary structure comprises 324 residues: Glutathione synthetase (324 aa).

The ATP-grasp domain occupies lysine 129 to valine 313. Valine 155–glycine 211 contacts ATP. Glutamate 284 and asparagine 286 together coordinate Mg(2+).

The protein belongs to the prokaryotic GSH synthase family. The cofactor is Mg(2+). It depends on Mn(2+) as a cofactor.

The catalysed reaction is gamma-L-glutamyl-L-cysteine + glycine + ATP = glutathione + ADP + phosphate + H(+). The protein operates within sulfur metabolism; glutathione biosynthesis; glutathione from L-cysteine and L-glutamate: step 2/2. This is Glutathione synthetase from Gloeobacter violaceus (strain ATCC 29082 / PCC 7421).